The chain runs to 208 residues: LysM and putative peptidoglycan-binding domain-containing protein 2 (208 aa).

The tract at residues 1 to 54 (MAEFSPVLPPLRDDGGGGRYGQPLFPRSRSGSESDSELSQSLARTKTRSYGSTA) is disordered. Residues 27–42 (RSRSGSESDSELSQSL) show a composition bias toward low complexity. Residues 65 to 109 (IEHRVTDGETLQGIALKYGVTMEQIKRVNKLFSNDCIFLRNTLSI) form the LysM domain. 2 disordered regions span residues 122-169 (LSLE…EELS) and 187-208 (AARK…YQEI). Residues 129 to 140 (SEGNTPQESPCV) show a composition bias toward polar residues. Positions 147 to 156 (PSPPPEPSVP) are enriched in pro residues.

The protein is LysM and putative peptidoglycan-binding domain-containing protein 2 (lysmd2) of Danio rerio (Zebrafish).